Consider the following 684-residue polypeptide: MFAEAAKTTRPCGMAEFKEKPEAPTEQLDVACGQENLPVGAWPPGAAPAPFQYTPDHVVGPGADIDPTQITFPGCICVKTPCLPGTCSCLRHGENYDDNSCLRDIGSGGKYAEPVFECNVLCRCSDHCRNRVVQKGLQFHFQVFKTHKKGWGLRTLEFIPKGRFVCEYAGEVLGFSEVQRRIHLQTKSDSNYIIAIREHVYNGQVMETFVDPTYIGNIGRFLNHSCEPNLLMIPVRIDSMVPKLALFAAKDIVPEEELSYDYSGRYLNLTVSEDKERLDHGKLRKPCYCGAKSCTAFLPFDSSLYCPVEKSNISCGNEKEPSMCGSAPSVFPSCKRLTLETMKMMLDKKQIRAIFLFEFKMGRKAAETTRNINNAFGPGTANERTVQWWFKKFCKGDESLEDEERSGRPSEVDNDQLRAIIEADPLTTTREVAEELNVNHSTVVRHLKQIGKVKKLDKWVPHELTENQKNRRFEVSSSLILRNHNEPFLDRIVTCDEKWILYDNRRRSAQWLDQEEAPKHFPKPILHPKKVMVTIWWSAAGLIHYSFLNPGETITSEKYAQEIDEMNQKLQRLQLALVNRKGPILLHDNARPHVAQPTLQKLNELGYEVLPHPPYSPDLLPTNYHVFKHLNNFLQGKRFHNQQDAENAFQEFVESQSTDFYATGINQLISRWQKCVDCNGSYFD.

Positions 1-345 (MFAEAAKTTR…RLTLETMKMM (345 aa)) are histone-lysine N-methyltransferase. The Pre-SET domain maps to 73-136 (PGCICVKTPC…HCRNRVVQKG (64 aa)). Positions 75, 77, 82, 87, 89, 118, 122, 124, and 128 each coordinate Zn(2+). The SET domain maps to 139–263 (FHFQVFKTHK…PEEELSYDYS (125 aa)). S-adenosyl-L-methionine contacts are provided by residues 149–151 (KGW), Y192, R220, and 223–224 (NH). Positions 226, 287, 289, and 294 each coordinate Zn(2+). Residues 283–299 (LRKPCYCGAKSCTAFLP) enclose the Post-SET domain. The tract at residues 346-684 (LDKKQIRAIF…CVDCNGSYFD (339 aa)) is mariner transposase Hsmar1. 2 consecutive DNA-binding regions (H-T-H motif) follow at residues 364 to 395 (KAAE…KFCK) and 428 to 448 (TTRE…RHLK). D496 contributes to the Mg(2+) binding site. N6-methyllysine is present on K498. S508 is modified (phosphoserine; by CHEK1). D588 is a binding site for Mg(2+).

It in the N-terminal section; belongs to the class V-like SAM-binding methyltransferase superfamily. The protein in the C-terminal section; belongs to the mariner transposase family. As to quaternary structure, homodimer. Interacts with PRPF19; required for SETMAR recruitment to damaged DNA sites. Interacts with PCNA. Interacts with TOP2A; stimulates TOP2A topoisomerase activity. May interact with RAD9A and/or RAD9B. Mg(2+) serves as cofactor. Post-translationally, methylated. Methylation regulates activity in DNA decatenation. In terms of processing, phosphorylated at Ser-508 by CHEK1 and dephosphorylated by protein phosphatase 2A/PP2A. Phosphorylation at Ser-508 is enhanced by DNA damage and promotes recruitment to damaged DNA. It stimulates DNA repair and impairs replication fork restart. Widely expressed, with highest expression in placenta and ovary and lowest expression in skeletal muscle.

It is found in the nucleus. The protein resides in the chromosome. The catalysed reaction is L-lysyl(36)-[histone H3] + 2 S-adenosyl-L-methionine = N(6),N(6)-dimethyl-L-lysyl(36)-[histone H3] + 2 S-adenosyl-L-homocysteine + 2 H(+). In terms of biological role, protein derived from the fusion of a methylase with the transposase of an Hsmar1 transposon that plays a role in DNA double-strand break repair, stalled replication fork restart and DNA integration. DNA-binding protein, it is indirectly recruited to sites of DNA damage through protein-protein interactions. Also has kept a sequence-specific DNA-binding activity recognizing the 19-mer core of the 5'-terminal inverted repeats (TIRs) of the Hsmar1 element and displays a DNA nicking and end joining activity. In parallel, has a histone methyltransferase activity and methylates 'Lys-4' and 'Lys-36' of histone H3. Specifically mediates dimethylation of H3 'Lys-36' at sites of DNA double-strand break and may recruit proteins required for efficient DSB repair through non-homologous end-joining. Also regulates replication fork processing, promoting replication fork restart and regulating DNA decatenation through stimulation of the topoisomerase activity of TOP2A. This Homo sapiens (Human) protein is Histone-lysine N-methyltransferase SETMAR.